The primary structure comprises 315 residues: Mitochondrial glutamate carrier 2 (315 aa).

Solcar repeat units follow at residues 6-92, 100-210, and 219-308; these read LSIT…FRRL, RNLK…LNNL, and ASFA…GIGE. The next 3 membrane-spanning stretches (helical) occupy residues 12-32, 61-81, and 106-126; these read LING…IDLA, FFGM…EKAI, and MLAG…MEML. The interval 141–160 is disordered; the sequence is QGSASAPSTSRSYTTGSAST. A compositionally biased stretch (polar residues) spans 142–159; that stretch reads GSASAPSTSRSYTTGSAS. The residue at position 145 (serine 145) is a Phosphoserine. Transmembrane regions (helical) follow at residues 185 to 205, 225 to 245, and 288 to 308; these read GLGA…PLFA, FVSG…LDVL, and ALVI…GIGE.

Belongs to the mitochondrial carrier (TC 2.A.29) family. As to expression, expressed in brain, to a lesser extent in testis, and poorly in all the other tissues.

The protein localises to the mitochondrion inner membrane. It catalyses the reaction L-glutamate(in) + H(+)(in) = L-glutamate(out) + H(+)(out). Its function is as follows. Responsible for the transport of glutamate from the cytosol into the mitochondrial matrix with the concomitant import of a proton (symport system). This Homo sapiens (Human) protein is Mitochondrial glutamate carrier 2.